A 607-amino-acid chain; its full sequence is ATP-dependent zinc metalloprotease FtsH 2 (607 aa).

Residues 1–2 are Cytoplasmic-facing; that stretch reads MR. A helical membrane pass occupies residues 3 to 23; sequence SLWIVLVLVLGSALLLQVMAA. The Periplasmic portion of the chain corresponds to 24-99; the sequence is SDDRIPYARF…PYTRVADELG (76 aa). The chain crosses the membrane as a helical span at residues 100-120; the sequence is LPPYLWLLLPLAGLAAMGHLA. At 121–607 the chain is on the cytoplasmic side; that stretch reads SRRATTAGTI…LREMVASGEA (487 aa). An ATP-binding site is contributed by 195 to 202; the sequence is GPPGTGKT. H418 contacts Zn(2+). E419 is an active-site residue. Residues H422 and D495 each coordinate Zn(2+).

It in the central section; belongs to the AAA ATPase family. In the C-terminal section; belongs to the peptidase M41 family. As to quaternary structure, homohexamer. The cofactor is Zn(2+).

The protein resides in the cell inner membrane. Acts as a processive, ATP-dependent zinc metallopeptidase for both cytoplasmic and membrane proteins. Plays a role in the quality control of integral membrane proteins. This chain is ATP-dependent zinc metalloprotease FtsH 2, found in Sorangium cellulosum (strain So ce56) (Polyangium cellulosum (strain So ce56)).